The following is a 175-amino-acid chain: Anterior gradient protein 2 homolog (175 aa).

The N-terminal stretch at 1-20 (MEKFSVSAILLLVAISGTLA) is a signal peptide. Residues 21-40 (KDTTVKSGAKKDPKDSRPKL) are required to promote cell adhesion. Positions 24-44 (TVKSGAKKDPKDSRPKLPQTL) are disordered. A compositionally biased stretch (basic and acidic residues) spans 29–38 (AKKDPKDSRP). Short sequence motifs (homodimer stabilization; interchain) lie at residues 45-54 (SRGWGDQLIW) and 60-67 (EALYRSKT).

This sequence belongs to the AGR family. As to quaternary structure, monomer and homodimer. Interacts with LYPD3 and DAG1 (alphaDAG1). Interacts with MUC2; disulfide-linked. Expressed in lung, skeletal muscle, testis, liver, stomach, colon, small intestine, the goblet cells of the intestine and the mucuous neck cells of the stomach.

It is found in the secreted. The protein resides in the endoplasmic reticulum. Functionally, required for MUC2 post-transcriptional synthesis and secretion. May play a role in the production of mucus by intestinal cells. Proto-oncogene that may play a role in cell migration, cell differentiation and cell growth. Promotes cell adhesion. This is Anterior gradient protein 2 homolog (Agr2) from Mus musculus (Mouse).